The sequence spans 381 residues: Na(+)/H(+) antiporter NhaA 1 (381 aa).

Transmembrane regions (helical) follow at residues 18–38, 53–73, 89–109, 118–138, 147–167, 170–190, 210–230, 251–271, 283–303, 321–341, and 348–368; these read GLLLLFVTVISLWAANSSYSA, ITHWINDGLMTIFFLLIGLEL, SLPIMAAFGGMLIPAATFLAL, GAGIPMATDIAFAIGILSLLG, VFLTALAVIDDLGAIIVIAVF, TSIGFVNLAIALGIWVFLFVL, YFMLNSGIHATITGVILAFVI, PVAFFILPLFAIANTCIAIES, FGIILGLVIGKPLGILLFSSI, ILGAGMLGGIGFTMSIFITLL, and IIVFSKIAIIIASIISGITGF.

It belongs to the NhaA Na(+)/H(+) (TC 2.A.33) antiporter family.

The protein resides in the cell inner membrane. The catalysed reaction is Na(+)(in) + 2 H(+)(out) = Na(+)(out) + 2 H(+)(in). Na(+)/H(+) antiporter that extrudes sodium in exchange for external protons. This chain is Na(+)/H(+) antiporter NhaA 1, found in Flavobacterium johnsoniae (strain ATCC 17061 / DSM 2064 / JCM 8514 / BCRC 14874 / CCUG 350202 / NBRC 14942 / NCIMB 11054 / UW101) (Cytophaga johnsonae).